The sequence spans 210 residues: Cytidylate kinase (210 aa).

7–15 (GPAASGKGT) contacts ATP.

It belongs to the cytidylate kinase family. Type 1 subfamily.

The protein localises to the cytoplasm. The catalysed reaction is CMP + ATP = CDP + ADP. It catalyses the reaction dCMP + ATP = dCDP + ADP. In Methylobacterium sp. (strain 4-46), this protein is Cytidylate kinase.